The chain runs to 218 residues: Pyridoxine/pyridoxamine 5'-phosphate oxidase (218 aa).

Substrate is bound by residues 14 to 17 (RREY) and lysine 72. FMN-binding positions include 67–72 (RIVLLK), 82–83 (YT), arginine 88, lysine 89, and glutamine 111. The substrate site is built by tyrosine 129, arginine 133, and serine 137. FMN-binding positions include 146 to 147 (QS) and tryptophan 191. Residue 197–199 (RLH) coordinates substrate. Arginine 201 lines the FMN pocket.

Belongs to the pyridoxamine 5'-phosphate oxidase family. Homodimer. It depends on FMN as a cofactor.

The enzyme catalyses pyridoxamine 5'-phosphate + O2 + H2O = pyridoxal 5'-phosphate + H2O2 + NH4(+). The catalysed reaction is pyridoxine 5'-phosphate + O2 = pyridoxal 5'-phosphate + H2O2. It functions in the pathway cofactor metabolism; pyridoxal 5'-phosphate salvage; pyridoxal 5'-phosphate from pyridoxamine 5'-phosphate: step 1/1. Its pathway is cofactor metabolism; pyridoxal 5'-phosphate salvage; pyridoxal 5'-phosphate from pyridoxine 5'-phosphate: step 1/1. Catalyzes the oxidation of either pyridoxine 5'-phosphate (PNP) or pyridoxamine 5'-phosphate (PMP) into pyridoxal 5'-phosphate (PLP). The protein is Pyridoxine/pyridoxamine 5'-phosphate oxidase of Escherichia fergusonii (strain ATCC 35469 / DSM 13698 / CCUG 18766 / IAM 14443 / JCM 21226 / LMG 7866 / NBRC 102419 / NCTC 12128 / CDC 0568-73).